We begin with the raw amino-acid sequence, 360 residues long: Phospho-N-acetylmuramoyl-pentapeptide-transferase (360 aa).

10 consecutive transmembrane segments (helical) span residues Tyr-21–Gly-41, Thr-73–Leu-93, Ala-94–Val-114, Trp-132–Gly-152, Ile-168–Gly-188, Gly-199–Thr-219, Val-239–Tyr-259, Val-263–Leu-283, Phe-288–Val-308, and Val-338–Lys-358.

This sequence belongs to the glycosyltransferase 4 family. MraY subfamily. The cofactor is Mg(2+).

Its subcellular location is the cell inner membrane. The catalysed reaction is UDP-N-acetyl-alpha-D-muramoyl-L-alanyl-gamma-D-glutamyl-meso-2,6-diaminopimeloyl-D-alanyl-D-alanine + di-trans,octa-cis-undecaprenyl phosphate = di-trans,octa-cis-undecaprenyl diphospho-N-acetyl-alpha-D-muramoyl-L-alanyl-D-glutamyl-meso-2,6-diaminopimeloyl-D-alanyl-D-alanine + UMP. It functions in the pathway cell wall biogenesis; peptidoglycan biosynthesis. In terms of biological role, catalyzes the initial step of the lipid cycle reactions in the biosynthesis of the cell wall peptidoglycan: transfers peptidoglycan precursor phospho-MurNAc-pentapeptide from UDP-MurNAc-pentapeptide onto the lipid carrier undecaprenyl phosphate, yielding undecaprenyl-pyrophosphoryl-MurNAc-pentapeptide, known as lipid I. The protein is Phospho-N-acetylmuramoyl-pentapeptide-transferase of Haemophilus influenzae (strain ATCC 51907 / DSM 11121 / KW20 / Rd).